A 104-amino-acid chain; its full sequence is MSTYAIIKTGGKQVKVEVGQAIYVEKLNVEAGQDVTFDEVVLVGGEKTVVGTPLVAGATVVGTVEKQGKQKKVVTFKYKPKKGSHRKQGHRQPYTKVVINAINA.

Belongs to the bacterial ribosomal protein bL21 family. In terms of assembly, part of the 50S ribosomal subunit. Contacts protein L20.

This protein binds to 23S rRNA in the presence of protein L20. The protein is Large ribosomal subunit protein bL21 of Streptococcus gordonii (strain Challis / ATCC 35105 / BCRC 15272 / CH1 / DL1 / V288).